A 452-amino-acid polypeptide reads, in one-letter code: Mitochondrial import inner membrane translocase subunit TIM44 (452 aa).

Phosphothreonine is present on Thr128. ATP is bound at residue 166-173 (GGEKLGRT). Ser180 carries the post-translational modification Phosphoserine. Residue Lys217 is modified to N6-succinyllysine.

Belongs to the Tim44 family. As to quaternary structure, probable component of the PAM complex at least composed of a mitochondrial HSP70 protein, GRPEL1 or GRPEL2, TIMM44, TIMM16/PAM16 and TIMM14/DNAJC19. The complex interacts with the TIMM23 component of the TIM23 complex. Interacts with SLC25A4/ANT1 and SLC25A5/ANT2; leading to inhibit the presequence translocase TIMM23, thereby promoting stabilization of PINK1.

The protein localises to the mitochondrion inner membrane. It localises to the mitochondrion matrix. In terms of biological role, essential component of the PAM complex, a complex required for the translocation of transit peptide-containing proteins from the inner membrane into the mitochondrial matrix in an ATP-dependent manner. Recruits mitochondrial HSP70 to drive protein translocation into the matrix using ATP as an energy source. This chain is Mitochondrial import inner membrane translocase subunit TIM44 (TIMM44), found in Homo sapiens (Human).